The chain runs to 255 residues: Triosephosphate isomerase (255 aa).

A substrate-binding site is contributed by 9–11; that stretch reads NWK. Residue histidine 95 is the Electrophile of the active site. Glutamate 167 functions as the Proton acceptor in the catalytic mechanism. Substrate contacts are provided by residues glycine 173, serine 212, and 233-234; that span reads GG.

It belongs to the triosephosphate isomerase family. In terms of assembly, homodimer.

It localises to the cytoplasm. It carries out the reaction D-glyceraldehyde 3-phosphate = dihydroxyacetone phosphate. It functions in the pathway carbohydrate biosynthesis; gluconeogenesis. The protein operates within carbohydrate degradation; glycolysis; D-glyceraldehyde 3-phosphate from glycerone phosphate: step 1/1. Involved in the gluconeogenesis. Catalyzes stereospecifically the conversion of dihydroxyacetone phosphate (DHAP) to D-glyceraldehyde-3-phosphate (G3P). This chain is Triosephosphate isomerase, found in Salmonella agona (strain SL483).